The chain runs to 333 residues: Procathepsin L (333 aa).

The N-terminal stretch at 1 to 17 (MNPTLILAAFCLGIASA) is a signal peptide. Positions 18 to 113 (TLTFDHSLEA…KVFQEPLFYE (96 aa)) are cleaved as a propeptide — activation peptide. Glu122 contacts Zn(2+). 2 cysteine pairs are disulfide-bonded: Cys135/Cys178 and Cys169/Cys211. Residue Cys138 is part of the active site. Residues Glu163, Asp184, Glu199, Glu205, and Glu209 each contribute to the Zn(2+) site. The N-linked (GlcNAc...) asparagine glycan is linked to Asn221. Zn(2+)-binding residues include Asp227, Asp250, His253, Asp273, and Asp275. Residues Cys269 and Cys322 are joined by a disulfide bond. The active site involves His276. Residues 289 to 291 (ESD) constitute a propeptide that is removed on maturation. Asn300 is an active-site residue.

This sequence belongs to the peptidase C1 family. In terms of assembly, dimer of a heavy and a light chain linked by disulfide bonds. Interacts with Long isoform of CD74/Ii chain; the interaction stabilizes the conformation of mature CTSL. During export along the endocytic pathway, pro-CTSL undergoes several proteolytic cleavages to generate the CTSL single-chain and two-chain mature forms, composed of a heavy chain linked to a light chain by disulfide bonds. Autocleavage; produces the single-chain CTSL after cleavage of the propeptide. The cleavage can be intermolecular.

The protein resides in the lysosome. Its subcellular location is the apical cell membrane. The protein localises to the cytoplasmic vesicle. It localises to the secretory vesicle. It is found in the chromaffin granule. The protein resides in the secreted. Its subcellular location is the extracellular space. The protein localises to the nucleus. It carries out the reaction Specificity close to that of papain. As compared to cathepsin B, cathepsin L exhibits higher activity toward protein substrates, but has little activity on Z-Arg-Arg-NHMec, and no peptidyl-dipeptidase activity.. Its activity is regulated as follows. Inhibited by the propeptide produced by autocleavage. Long isoform of CD74/Ii chain stabilizes the conformation of mature CTSL by binding to its active site and serving as a chaperone to help maintain a pool of mature enzyme in endocytic compartments and extracellular space of APCs. IFNG enhances the conversion into the CTSL mature and active form. Inhibited by CST6. Inhibited by the glycopeptide antibiotic teicoplanin. Inhibited by amantadine. In terms of biological role, thiol protease important for the overall degradation of proteins in lysosomes. Plays a critical for normal cellular functions such as general protein turnover, antigen processing and bone remodeling. Involved in the solubilization of cross-linked TG/thyroglobulin and in the subsequent release of thyroid hormone thyroxine (T4) by limited proteolysis of TG/thyroglobulin in the thyroid follicle lumen. In neuroendocrine chromaffin cells secretory vesicles, catalyzes the prohormone proenkephalin processing to the active enkephalin peptide neurotransmitter. In thymus, regulates CD4(+) T cell positive selection by generating the major histocompatibility complex class II (MHCII) bound peptide ligands presented by cortical thymic epithelial cells. Also mediates invariant chain processing in cortical thymic epithelial cells. Major elastin-degrading enzyme at neutral pH. Accumulates as a mature and active enzyme in the extracellular space of antigen presenting cells (APCs) to regulate degradation of the extracellular matrix in the course of inflammation. Secreted form generates endostatin from COL18A1. Critical for cardiac morphology and function. Plays an important role in hair follicle morphogenesis and cycling, as well as epidermal differentiation. Required for maximal stimulation of steroidogenesis by TIMP1. (Microbial infection) In cells lacking TMPRSS2 expression, facilitates human coronaviruses SARS-CoV and SARS-CoV-2 infections via a slow acid-activated route with the proteolysis of coronavirus spike (S) glycoproteins in lysosome for entry into host cell. Proteolysis within lysosomes is sufficient to activate membrane fusion by coronaviruses SARS-CoV and EMC (HCoV-EMC) S as well as Zaire ebolavirus glycoproteins. Its function is as follows. Functions in the regulation of cell cycle progression through proteolytic processing of the CUX1 transcription factor. Translation initiation at downstream start sites allows the synthesis of isoforms that are devoid of a signal peptide and localize to the nucleus where they cleave the CUX1 transcription factor and modify its DNA binding properties. This chain is Procathepsin L, found in Homo sapiens (Human).